The following is a 443-amino-acid chain: KICSTOR complex protein ITFG2 (443 aa).

The stretch at 19–48 is one FG-GAP 1; atypical repeat; sequence FPHAICLGDVDNDALNELVVGDTSGKLSVY. At S104 the chain carries Phosphoserine. Residues 125-154 form an FG-GAP 2; atypical repeat; that stretch reads NTKVMLISDIDGDGCYELVVGYTDRVVRAF. Residue S219 is modified to Phosphoserine.

As to quaternary structure, part of the KICSTOR complex composed of KPTN, ITFG2, KICS2 and SZT2. SZT2 probably serves as a link between the other three proteins in the KICSTOR complex and may mediate the direct interaction with the GATOR complex via GATOR1. The KICSTOR complex interacts directly with the GATOR1 complex and most probably indirectly with the GATOR2 complex in an amino acid-independent manner.

It localises to the lysosome membrane. In terms of biological role, as part of the KICSTOR complex functions in the amino acid-sensing branch of the TORC1 signaling pathway. Recruits, in an amino acid-independent manner, the GATOR1 complex to the lysosomal membranes and allows its interaction with GATOR2 and the RAG GTPases. Functions upstream of the RAG GTPases and is required to negatively regulate mTORC1 signaling in absence of amino acids. In absence of the KICSTOR complex mTORC1 is constitutively localized to the lysosome and activated. The KICSTOR complex is also probably involved in the regulation of mTORC1 by glucose. The protein is KICSTOR complex protein ITFG2 of Mus musculus (Mouse).